Here is a 47-residue protein sequence, read N- to C-terminus: MATKSVNKPDEPVFYPVFTVRWLAVHTLAIPTVFFLGAIAAMQFIQR.

A helical membrane pass occupies residues 22 to 38; that stretch reads WLAVHTLAIPTVFFLGA. Heme is bound at residue His26.

Belongs to the PsbE/PsbF family. In terms of assembly, heterodimer of an alpha subunit and a beta subunit. PSII is composed of 1 copy each of membrane proteins PsbA, PsbB, PsbC, PsbD, PsbE, PsbF, PsbH, PsbI, PsbJ, PsbK, PsbL, PsbM, PsbT, PsbX, PsbY, PsbZ, Psb30/Ycf12, peripheral proteins PsbO, CyanoQ (PsbQ), PsbU, PsbV and a large number of cofactors. It forms dimeric complexes. Heme b serves as cofactor.

It is found in the cellular thylakoid membrane. Functionally, this b-type cytochrome is tightly associated with the reaction center of photosystem II (PSII). PSII is a light-driven water:plastoquinone oxidoreductase that uses light energy to abstract electrons from H(2)O, generating O(2) and a proton gradient subsequently used for ATP formation. It consists of a core antenna complex that captures photons, and an electron transfer chain that converts photonic excitation into a charge separation. In Synechococcus sp. (strain JA-3-3Ab) (Cyanobacteria bacterium Yellowstone A-Prime), this protein is Cytochrome b559 subunit beta.